A 215-amino-acid chain; its full sequence is Deoxyribose-phosphate aldolase (215 aa).

Asp-90 serves as the catalytic Proton donor/acceptor. The active-site Schiff-base intermediate with acetaldehyde is the Lys-152. The active-site Proton donor/acceptor is Lys-181.

This sequence belongs to the DeoC/FbaB aldolase family. DeoC type 1 subfamily.

Its subcellular location is the cytoplasm. The catalysed reaction is 2-deoxy-D-ribose 5-phosphate = D-glyceraldehyde 3-phosphate + acetaldehyde. It functions in the pathway carbohydrate degradation; 2-deoxy-D-ribose 1-phosphate degradation; D-glyceraldehyde 3-phosphate and acetaldehyde from 2-deoxy-alpha-D-ribose 1-phosphate: step 2/2. Its function is as follows. Catalyzes a reversible aldol reaction between acetaldehyde and D-glyceraldehyde 3-phosphate to generate 2-deoxy-D-ribose 5-phosphate. This chain is Deoxyribose-phosphate aldolase, found in Ureaplasma urealyticum serovar 10 (strain ATCC 33699 / Western).